A 486-amino-acid polypeptide reads, in one-letter code: MKALDQLTFDNRFARLGDAFSTQVLPEPIADPRLVIASKSAMALLDLDPAQADTPVFAELFSGHKLWEGADPRAMVYSGHQFGSYNPRLGDGRGLLLAEVVNDAGEHWDLHLKGAGQTPYSRMGDGRAVLRSSIREFLASEALHALGIATSRALCVIGSSTPVWRETRESAAMLTRLAQSHVRFGHFEYFYYTKQPEQQRVLIDHVLEQHYPECREAEQPYLAMFRTIVERNAELIAHWQAYGFCHGVMNTDNMSILGITFDFGPYAFLDDFDANFICNHSDDRGRYSYANQVPIAHWNLSALAQALTTVIEVEPLKEALGLFLPLYQAHYLDLMRRRLGLTTAEDDDMALVERLLQRMQSGGVDYNLFFRRLGDQPVAEALKGVRDDFIDLAGFDAWGADYLARCEREAGNGDGRRERMHAVNPLYVLRNYLAQKAIEAAEAGDYSEVRRLHQVLSTPFEEQAGMQAYAERPPAWGKHLEISCSS.

Residues Gly-90, Gly-92, Arg-93, Lys-113, Asp-125, Gly-126, Arg-176, and Arg-183 each contribute to the ATP site. Asp-252 acts as the Proton acceptor in catalysis. Positions 253 and 262 each coordinate Mg(2+). Residue Asp-262 coordinates ATP.

This sequence belongs to the SELO family. Mg(2+) serves as cofactor. Mn(2+) is required as a cofactor.

The enzyme catalyses L-seryl-[protein] + ATP = 3-O-(5'-adenylyl)-L-seryl-[protein] + diphosphate. It catalyses the reaction L-threonyl-[protein] + ATP = 3-O-(5'-adenylyl)-L-threonyl-[protein] + diphosphate. The catalysed reaction is L-tyrosyl-[protein] + ATP = O-(5'-adenylyl)-L-tyrosyl-[protein] + diphosphate. It carries out the reaction L-histidyl-[protein] + UTP = N(tele)-(5'-uridylyl)-L-histidyl-[protein] + diphosphate. The enzyme catalyses L-seryl-[protein] + UTP = O-(5'-uridylyl)-L-seryl-[protein] + diphosphate. It catalyses the reaction L-tyrosyl-[protein] + UTP = O-(5'-uridylyl)-L-tyrosyl-[protein] + diphosphate. In terms of biological role, nucleotidyltransferase involved in the post-translational modification of proteins. It can catalyze the addition of adenosine monophosphate (AMP) or uridine monophosphate (UMP) to a protein, resulting in modifications known as AMPylation and UMPylation. The protein is Protein nucleotidyltransferase YdiU of Pseudomonas putida (strain W619).